The chain runs to 263 residues: 7beta-hydroxysteroid dehydrogenase (263 aa).

NADP(+) contacts are provided by residues 17–21, 40–41, and 66–67; these read TEGVG, RR, and DF. The Proton acceptor role is filled by Tyr-156. Ser-240 provides a ligand contact to NADP(+).

It belongs to the short-chain dehydrogenases/reductases (SDR) family.

It carries out the reaction a 7beta-hydroxysteroid + NADP(+) = a 7-oxosteroid + NADPH + H(+). The catalysed reaction is 7-oxolithocholate + NADPH + H(+) = ursodeoxycholate + NADP(+). Its function is as follows. 7beta-hydroxysteroid dehydrogenase that catalyzes the reduction of the 7-oxo group of 7-oxo-lithocholate (7-oxo-LCA), to yield ursodeoxycholate (UDCA). As R.gnavus is a common core bacterium of the human gut microbiota, this enzyme contributes to the formation of UDCA in the human colon. UDCA is regarded as a chemopreventive beneficial secondary bile acid due to its low hydrophobicity; it protects hepatocytes and bile duct epithelial cells against necrosis and apoptosis induced by more hydrophobic secondary bile acids like deoxycholate (DCA). This enzyme is also able to catalyze the reverse reaction in vitro, i.e. the oxidation of the 7beta-hydroxy group of UDCA to 7-oxo-LCA, but much less efficiently than the reduction reaction. The sequence is that of 7beta-hydroxysteroid dehydrogenase from Mediterraneibacter gnavus (strain ATCC 29149 / DSM 114966 / JCM 6515 / VPI C7-9) (Ruminococcus gnavus).